Here is a 619-residue protein sequence, read N- to C-terminus: Serine/threonine-protein kinase pkn1 (619 aa).

In terms of domain architecture, Protein kinase spans 15–302; the sequence is YRILYRKGQS…SSQNLPQAVL (288 aa). Residue 21-29 participates in ATP binding; it reads KGQSLWSED. Catalysis depends on Glu141, which acts as the Proton acceptor.

The protein belongs to the protein kinase superfamily. Ser/Thr protein kinase family. Autophosphorylated on serine and threonine residues.

It carries out the reaction L-seryl-[protein] + ATP = O-phospho-L-seryl-[protein] + ADP + H(+). The enzyme catalyses L-threonyl-[protein] + ATP = O-phospho-L-threonyl-[protein] + ADP + H(+). In terms of biological role, together with the serine/threonine kinase PknD, may play a role in the specific interactions with host proteins during intracellular growth. In Chlamydia pneumoniae (Chlamydophila pneumoniae), this protein is Serine/threonine-protein kinase pkn1 (pkn1).